The chain runs to 146 residues: MGLRLNELSPGVGAKKTAQRRGRGIGSGLGKTGGRGVKGQKSRSGSSVRSGFEGGQTPLYRRLPKFGFTSKMAMTTAEVRLSELNQIEGDVVSIETLKAANLIRRDMKRARVMLSGEVTKAYTFKGIKVTKGAKQAIEAAGGSIEE.

Residues 1-56 (MGLRLNELSPGVGAKKTAQRRGRGIGSGLGKTGGRGVKGQKSRSGSSVRSGFEGGQ) form a disordered region. Residues 24 to 37 (GIGSGLGKTGGRGV) show a composition bias toward gly residues.

The protein belongs to the universal ribosomal protein uL15 family. As to quaternary structure, part of the 50S ribosomal subunit.

In terms of biological role, binds to the 23S rRNA. The polypeptide is Large ribosomal subunit protein uL15 (Psychrobacter arcticus (strain DSM 17307 / VKM B-2377 / 273-4)).